The sequence spans 787 residues: ABC transporter G family member 5 (787 aa).

Residues 1–17 (MSRFVDKLPLFDRRPSP) are compositionally biased toward basic and acidic residues. Disordered regions lie at residues 1–25 (MSRF…EGLP) and 71–116 (NDAR…EGQP). Residues 74 to 85 (RSGSSTPISSPR) show a composition bias toward polar residues. The 262-residue stretch at 121-382 (LKFTDLTYSV…FLDFGKPIPD (262 aa)) folds into the ABC transporter domain. Residue 175-182 (GASGSGKS) coordinates ATP. The ABC transmembrane type-2 domain occupies 484-691 (GVLTRRAFIN…PYEAVMQNEF (208 aa)). 8 consecutive transmembrane segments (helical) span residues 500–520 (VFII…TIFW), 535–555 (FFAI…PVFL), 576–596 (VLSH…AFAL), 599–619 (FFSV…AIVL), 620–640 (ASFW…THVM), 641–661 (LGFP…GFFI), 728–745 (SLGV…GPDF), and 760–780 (LWIT…SLLL).

The protein belongs to the ABC transporter superfamily. ABCG family. Eye pigment precursor importer (TC 3.A.1.204) subfamily. As to expression, expressed in the crown root primordia, endodermis, pericycle and stele in the root, in leaf primordia of main and axillary shoots, and in the vascular cells and leaf epidermis of older leaves.

Its subcellular location is the cell membrane. Functionally, essential transporter for growth and development under abiotic stress. Mediates shoot branching by promoting the outgrowth of lateral shoots. Required for salt tolerance via Na/K homeostasis, at least partly by regulating SKC1/OsHKT1;5. Necessary for hypodermal suberization of roots, which contributes to formation of the apoplastic barrier. This Oryza sativa subsp. japonica (Rice) protein is ABC transporter G family member 5.